A 473-amino-acid polypeptide reads, in one-letter code: ATP synthase subunit beta (473 aa).

158–165 contributes to the ATP binding site; sequence GGAGVGKT.

It belongs to the ATPase alpha/beta chains family. F-type ATPases have 2 components, CF(1) - the catalytic core - and CF(0) - the membrane proton channel. CF(1) has five subunits: alpha(3), beta(3), gamma(1), delta(1), epsilon(1). CF(0) has three main subunits: a(1), b(2) and c(9-12). The alpha and beta chains form an alternating ring which encloses part of the gamma chain. CF(1) is attached to CF(0) by a central stalk formed by the gamma and epsilon chains, while a peripheral stalk is formed by the delta and b chains.

It is found in the cell membrane. The catalysed reaction is ATP + H2O + 4 H(+)(in) = ADP + phosphate + 5 H(+)(out). Functionally, produces ATP from ADP in the presence of a proton gradient across the membrane. The catalytic sites are hosted primarily by the beta subunits. In Geobacillus thermodenitrificans (strain NG80-2), this protein is ATP synthase subunit beta.